We begin with the raw amino-acid sequence, 29 residues long: Glucagon (29 aa).

The protein belongs to the glucagon family.

The protein localises to the secreted. Glucagon plays a key role in glucose metabolism and homeostasis. Regulates blood glucose by increasing gluconeogenesis and decreasing glycolysis. The polypeptide is Glucagon (GCG) (Struthio camelus (Common ostrich)).